The primary structure comprises 511 residues: Protein phosphatase 2C 16 (511 aa).

The first 22 residues, 1-22, serve as a signal peptide directing secretion; the sequence is MEEMTPAVAMTLSLAANTMCES. Positions 189 to 501 constitute a PPM-type phosphatase domain; the sequence is LWGTVSIQGN…DNISIIVIDL (313 aa). 4 residues coordinate Mn(2+): Asp-243, Gly-244, Asp-432, and Asp-492.

Belongs to the PP2C family. Interacts with SWI3B (via N-terminus). Interacts with ABA-bounded PYR1, PYL1, PYL2, PYL3, PYL4, PYL5, PYL6, PYL8 and PYL9, and with free PYL2, PYL3, PYL4, PYL10 and PYL13. Requires Mg(2+) as cofactor. It depends on Mn(2+) as a cofactor. As to expression, expressed in seeds, roots, stems, leaves and flowers, especially in meristematic tissues, guard cells, embryo and siliques.

Its subcellular location is the cytoplasm. It localises to the nucleus. It catalyses the reaction O-phospho-L-seryl-[protein] + H2O = L-seryl-[protein] + phosphate. It carries out the reaction O-phospho-L-threonyl-[protein] + H2O = L-threonyl-[protein] + phosphate. Its activity is regulated as follows. Repressed by PYR/PYL/RCAR ABA receptors in an ABA-dependent manner. Its function is as follows. Key component and repressor of the abscisic acid (ABA) signaling pathway that regulates numerous ABA responses, such as stomatal closure, seed germination and inhibition of vegetative growth. Confers enhanced sensitivity to drought. This Arabidopsis thaliana (Mouse-ear cress) protein is Protein phosphatase 2C 16 (HAB1).